A 463-amino-acid chain; its full sequence is Hydrolase pyiE (463 aa).

Serine 252 acts as the Nucleophile in catalysis. Residues 350 to 373 (KSDGSRANGKKSHSPTDGGGVESD) are disordered.

It belongs to the AB hydrolase superfamily. FUS2 hydrolase family. Homodimer.

It participates in mycotoxin biosynthesis. Its function is as follows. Hydrolyase; part of the gene cluster that mediates the biosynthesis of the mycotoxin pyrichalasin H, a tyrosine-derived cytochalasan that inhibits the growth of rice seedlings, but also inhibits lymphocyte capping and actin polymerization and alters cell morphology. Pyrichalasin H is indicated as the responsible agent for the genus-specific pathogenicity of M.grisea toward crabgrass. The first step in the pathway is catalyzed by the O-methyltransferase pyiA which methylates free tyrosine to generate the precursor O-methyltyrosine. The hybrid PKS-NRPS pyiS, assisted by the enoyl reductase pyiC, are responsible for fusion of the O-methyltyrosine precursor and the polyketide backbone. The polyketide synthase module (PKS) of pyiS is responsible for the synthesis of the polyketide backbone and the downstream nonribosomal peptide synthetase (NRPS) amidates the carboxyl end of the polyketide with the O-methyltyrosine precursor. As the NRPS A-domain demonstrates substrate tolerance, pyiS can also use phenylalanine, tyrosine and even para-chlorophenylalanine as amino acid precursor, which leads to the production of novel cytochalasans, including halogenated cytochalasans. Because pyiS lacks a designated enoylreductase (ER) domain, the required activity is provided the enoyl reductase pyiC. Reduction by the hydrolyase pyiE leads to 1,5-dihydropyrrolone, which is substrate for dehydration and intra-molecular Diels-Alder cyclization by the Diels-Alderase pyiF to yield the required isoindolone-fused macrocycle. The tailoring cytochrome P450 monooxygenases piyD and piyG catalyze the hydroxylation at C-18 and C-7, respectivily, whereas the short-chain dehydrogenase/reductase pyiH reduces the carbonyl at C-21 in preparation for the transfer of an acetyl group by the acetyltransferase pyiB. These 3 reactions whose order is not clear yet, lead to the production of O-methylpyrichalasin J, a deacetylated pyrichalasin H. Finally, pyiB to converts O-methylpyrichalasin J into the final product pyrichalasin H via acetylation of C-21. The polypeptide is Hydrolase pyiE (Pyricularia grisea (Crabgrass-specific blast fungus)).